We begin with the raw amino-acid sequence, 375 residues long: Negative elongation factor E (375 aa).

Residues 7-36 (GLSEEEEALQKKFNKLKKKKKALLALKKQS) adopt a coiled-coil conformation. Residues 30 to 58 (LALKKQSSSGPASQGGVKRSLSEQPVVDT) form a disordered region. A Phosphoserine modification is found at Ser51. Residue Lys78 forms a Glycyl lysine isopeptide (Lys-Gly) (interchain with G-Cter in SUMO1); alternate linkage. Lys78 is covalently cross-linked (Glycyl lysine isopeptide (Lys-Gly) (interchain with G-Cter in SUMO2); alternate). A disordered region spans residues 79–262 (AETKNSGFKR…SDSFPERRAP (184 aa)). A Glycyl lysine isopeptide (Lys-Gly) (interchain with G-Cter in SUMO2) cross-link involves residue Lys82. The span at 90–101 (RTLEGKLKDPEK) shows a compositional bias: basic and acidic residues. Phosphoserine is present on residues Ser113 and Ser115. Glu122 bears the PolyADP-ribosyl glutamic acid mark. A phosphoserine mark is found at Ser131 and Ser139. Glu151 bears the PolyADP-ribosyl glutamic acid mark. Over residues 155–167 (APGAGDGPPRGFD) the composition is skewed to low complexity. PolyADP-ribosyl glutamic acid is present on Glu172. Residues Ser179, Ser181, Ser185, and Ser187 each carry the phosphoserine modification. 4 repeat units span residues 184–185 (RS), 186–187 (RS), 188–189 (RD), and 190–191 (RS). The interval 184-247 (RSRSRDRSHD…RDRDRERDRE (64 aa)) is 32 X 2 AA approximate tandem repeats of R-[DSE]. Basic and acidic residues predominate over residues 186–260 (RSRDRSHDRS…RRSDSFPERR (75 aa)). Ser191 carries the phosphoserine modification. The 5; approximate repeat unit spans residues 192-193 (HD). Tandem repeats lie at residues 194-195 (RS), 196-197 (RD), 198-199 (RD), and 200-201 (RD). A 10; approximate repeat occupies 202-203 (KE). 7 consecutive repeat copies span residues 204 to 205 (RD), 206 to 207 (RD), 208 to 209 (RD), 210 to 211 (RD), 212 to 213 (RD), 214 to 215 (RD), and 216 to 217 (RD). An 18; approximate repeat occupies 218–219 (KD). The 19; approximate repeat unit spans residues 220–221 (KD). Repeat copies occupy residues 222–223 (RD), 224–225 (RD), 226–227 (RD), and 228–229 (RD). Residues 230–231 (KE) form a 24; approximate repeat. 8 consecutive repeat copies span residues 232–233 (RD), 234–235 (RD), 236–237 (RD), 238–239 (RD), 240–241 (RD), 242–243 (RE), 244–245 (RD), and 246–247 (RE). Phosphoserine occurs at positions 253 and 255. The 71-residue stretch at 266–336 (NTLYVYGEDM…VQLKVNIARK (71 aa)) folds into the RRM domain. A phosphothreonine mark is found at Thr276 and Thr278. Residues Ser285 and Ser357 each carry the phosphoserine modification.

This sequence belongs to the RRM NELF-E family. The NELF complex is composed of NELFA, NELFB, NELFCD and NELFE. Interacts with NELFB. In terms of processing, phosphorylated by the P-TEFb complex at sites next to its RNA recognition motif, promoting its release from chromatin. Post-translationally, sumoylated. Poly-ADP-ribosylated by PARP1, thereby preventing RNA-binding and relieving transcription pausing.

The protein resides in the nucleus. It localises to the chromosome. In terms of biological role, essential component of the NELF complex, a complex that negatively regulates the elongation of transcription by RNA polymerase II. The NELF complex, which acts via an association with the DSIF complex and causes transcriptional pausing, is counteracted by the P-TEFb kinase complex. Provides the strongest RNA binding activity of the NELF complex and may initially recruit the NELF complex to RNA. This chain is Negative elongation factor E (Nelfe), found in Mus musculus (Mouse).